Reading from the N-terminus, the 159-residue chain is Ribosomal RNA large subunit methyltransferase H (159 aa).

Residues leucine 76, glycine 108, and 127–132 (FSKMTF) each bind S-adenosyl-L-methionine.

This sequence belongs to the RNA methyltransferase RlmH family. As to quaternary structure, homodimer.

It is found in the cytoplasm. It carries out the reaction pseudouridine(1915) in 23S rRNA + S-adenosyl-L-methionine = N(3)-methylpseudouridine(1915) in 23S rRNA + S-adenosyl-L-homocysteine + H(+). Specifically methylates the pseudouridine at position 1915 (m3Psi1915) in 23S rRNA. The sequence is that of Ribosomal RNA large subunit methyltransferase H from Shouchella clausii (strain KSM-K16) (Alkalihalobacillus clausii).